Consider the following 370-residue polypeptide: Cytochrome b (370 aa).

4 helical membrane passes run phenylalanine 25–valine 45, tryptophan 69–isoleucine 90, tryptophan 105–leucine 125, and phenylalanine 170–leucine 190. Positions 75 and 89 each coordinate heme b. The heme b site is built by histidine 174 and histidine 188. An a ubiquinone-binding site is contributed by histidine 193. The next 4 membrane-spanning stretches (helical) occupy residues tyrosine 218 to phenylalanine 238, leucine 280 to histidine 300, leucine 312 to threonine 332, and phenylalanine 339 to proline 358.

It belongs to the cytochrome b family. In terms of assembly, the cytochrome bc1 complex contains 3 respiratory subunits (MT-CYB, CYC1 and UQCRFS1), 2 core proteins (UQCRC1 and UQCRC2) and probably 6 low-molecular weight proteins. Heme b is required as a cofactor.

It localises to the mitochondrion inner membrane. Functionally, component of the ubiquinol-cytochrome c reductase complex (complex III or cytochrome b-c1 complex) that is part of the mitochondrial respiratory chain. The b-c1 complex mediates electron transfer from ubiquinol to cytochrome c. Contributes to the generation of a proton gradient across the mitochondrial membrane that is then used for ATP synthesis. The chain is Cytochrome b (MT-CYB) from Chilabothrus subflavus (Jamaican yellow boa).